Consider the following 442-residue polypeptide: DNA topoisomerase 6 subunit A3 (442 aa).

The disordered stretch occupies residues 1 to 34 (MSEKKRRGGAGAGAASGSASKKPRVSTAASYAES). The region spanning 91–224 (QDSASVTSRI…LHVVASEKGV (134 aa)) is the Topo IIA-type catalytic domain. Residue Tyr185 is the O-(5'-phospho-DNA)-tyrosine intermediate of the active site. Mg(2+)-binding residues include Glu271 and Asp323.

This sequence belongs to the TOP6A family. Homodimer. Heterotetramer of two TOP6A and two TOP6B subunits. Interacts with TOP6B. The cofactor is Mg(2+). In terms of tissue distribution, highly expressed in flowers before pollination. Expressed in roots and shoots.

It is found in the nucleus. The enzyme catalyses ATP-dependent breakage, passage and rejoining of double-stranded DNA.. Its function is as follows. Component of the DNA topoisomerase VI involved in chromatin organization and progression of endoreduplication cycles. Relaxes both positive and negative superturns and exhibits a strong decatenase activity. May be involved in cell proliferation and stress tolerance. The chain is DNA topoisomerase 6 subunit A3 from Oryza sativa subsp. indica (Rice).